The sequence spans 208 residues: Ribosomal RNA large subunit methyltransferase E (208 aa).

S-adenosyl-L-methionine contacts are provided by Gly63, Trp65, Asp83, Asp99, and Asp124. Catalysis depends on Lys164, which acts as the Proton acceptor.

This sequence belongs to the class I-like SAM-binding methyltransferase superfamily. RNA methyltransferase RlmE family.

Its subcellular location is the cytoplasm. It carries out the reaction uridine(2552) in 23S rRNA + S-adenosyl-L-methionine = 2'-O-methyluridine(2552) in 23S rRNA + S-adenosyl-L-homocysteine + H(+). Specifically methylates the uridine in position 2552 of 23S rRNA at the 2'-O position of the ribose in the fully assembled 50S ribosomal subunit. The sequence is that of Ribosomal RNA large subunit methyltransferase E from Alcanivorax borkumensis (strain ATCC 700651 / DSM 11573 / NCIMB 13689 / SK2).